Reading from the N-terminus, the 520-residue chain is UvrABC system protein C (520 aa).

Residues 11–89 form the GIY-YIG domain; it reads EEPGCYQFKD…IKKYQPKYNI (79 aa). The 36-residue stretch at 195–230 folds into the UVR domain; it reads QDLIYDLRKEMETFAAAEEYEKALVIRDRIAAIENL.

Belongs to the UvrC family. As to quaternary structure, interacts with UvrB in an incision complex.

It localises to the cytoplasm. The UvrABC repair system catalyzes the recognition and processing of DNA lesions. UvrC both incises the 5' and 3' sides of the lesion. The N-terminal half is responsible for the 3' incision and the C-terminal half is responsible for the 5' incision. This is UvrABC system protein C from Methanospirillum hungatei JF-1 (strain ATCC 27890 / DSM 864 / NBRC 100397 / JF-1).